The primary structure comprises 149 residues: Large ribosomal subunit protein uL15 (149 aa).

The disordered stretch occupies residues 8–49 (HDLRPAAGSNKPKTRVGRGEASKGKTAGRGTKGTGARKQVPA). Residues 31 to 45 (GKTAGRGTKGTGARK) show a composition bias toward low complexity.

This sequence belongs to the universal ribosomal protein uL15 family. In terms of assembly, part of the 50S ribosomal subunit.

Functionally, binds to the 23S rRNA. This is Large ribosomal subunit protein uL15 from Corynebacterium aurimucosum (strain ATCC 700975 / DSM 44827 / CIP 107346 / CN-1) (Corynebacterium nigricans).